Consider the following 2944-residue polypeptide: Collagen alpha-1(VII) chain (2944 aa).

A signal peptide spans 1–24; sequence MRLRLLVAALCAAEILMGAPEVWA. Residues 18-1254 are nonhelical region (NC1); that stretch reads GAPEVWAQPR…TGPCAVHCPK (1237 aa). The region spanning 39-212 is the VWFA 1 domain; sequence DIVFLLDGSS…SILRTLLPLI (174 aa). 9 Fibronectin type-III domains span residues 235 to 330, 331 to 417, 418 to 508, 511 to 598, 601 to 688, 689 to 776, 779 to 867, 870 to 957, and 959 to 1053; these read GPRD…TAKE, GLEL…TASS, VEQT…LEQL, PVMN…DPEA, VVPG…DPLG, PVRR…APEP, SVSK…PPAT, LLET…EPSH, and PSTE…SHGP. Asn338 is a glycosylation site (N-linked (GlcNAc...) asparagine). Asn787 carries an N-linked (GlcNAc...) asparagine glycan. In terms of domain architecture, VWFA 2 spans 1055-1230; sequence DVVFLLHATR…PGLDRAVSDL (176 aa). N-linked (GlcNAc...) asparagine glycosylation is present at Asn1110. Positions 1171 to 1173 match the Cell attachment site motif; sequence RGD. The interrupted collagenous region stretch occupies residues 1255–1475; that stretch reads GQKGEPGVTG…GLRGAPGMTG (221 aa). The triple-helical region stretch occupies residues 1255–2775; the sequence is GQKGEPGVTG…GPRGEKGEAA (1521 aa). Disordered regions lie at residues 1259–1934 and 1960–2773; these read EPGV…GSLP and SSGS…EKGE. The span at 1338–1352 shows a compositional bias: low complexity; sequence RGPQGPKGEPGEPGQ. Over residues 1353–1363 the composition is skewed to gly residues; sequence ITGGGGPGFPG. Composition is skewed to basic and acidic residues over residues 1397 to 1406 and 1439 to 1448; these read KGDKGDRGER and PGEKGEKGDC. The span at 1507–1518 shows a compositional bias: low complexity; that stretch reads PGAAGHPGVEGP. Composition is skewed to basic and acidic residues over residues 1527-1536, 1627-1639, and 1666-1680; these read RRGEKGEPGR, RGRD…KGDE, and VGEK…EDGR. Over residues 1813–1822 the composition is skewed to pro residues; sequence PPGPPGPPGV. Basic and acidic residues-rich tracts occupy residues 1846–1855, 1862–1871, and 1968–1984; these read EDGRKGEKGD, EGPDGPKGER, and PERR…RGPP. The Cell attachment site motif lies at 2002-2004; sequence RGD. Positions 2040 to 2049 are enriched in gly residues; sequence GRAGGSGEAG. A compositionally biased stretch (basic and acidic residues) spans 2050–2068; the sequence is RPGERGERGEKGERGDQGR. A Cell attachment site motif is present at residues 2063-2065; that stretch reads RGD. A compositionally biased stretch (pro residues) spans 2074 to 2083; sequence LPGPPGPPGP. The segment covering 2130-2140 has biased composition (basic and acidic residues); the sequence is DVGEPGKRGHD. 4-hydroxyproline occurs at positions 2158, 2167, 2176, and 2179. Composition is skewed to low complexity over residues 2182-2197, 2226-2241, 2279-2299, and 2306-2317; these read PGLA…SGLK, SGLV…PGQV, PKGE…PPGA, and PGDLAGALLGEP. Over residues 2319–2335 the composition is skewed to basic and acidic residues; that stretch reads AKGDRGLPGPRGEKGEA. Over residues 2414–2427 the composition is skewed to low complexity; it reads ERGLAGPPGREGAP. 2 stretches are compositionally biased toward basic and acidic residues: residues 2462-2477 and 2525-2544; these read RGER…DGHP and AKGD…KGPR. Over residues 2576–2594 the composition is skewed to low complexity; the sequence is PKGEPGAAGIPGEPGAPGK. The Cell attachment site motif lies at 2601 to 2603; that stretch reads RGD. Residues 2615-2636 are compositionally biased toward basic and acidic residues; sequence LKGEKGIKGTCGRDGERGDKGE. Residues Lys2616 and Lys2622 each carry the 5-hydroxylysine modification. Positions 2631-2633 match the Cell attachment site motif; it reads RGD. 3 positions are modified to 4-hydroxyproline: Pro2655, Pro2658, and Pro2664. Residues 2695–2704 show a composition bias toward gly residues; the sequence is GPPGVGGFPG. Residues 2776–2944 are nonhelical region (NC2); it reads LTEDDIRDFV…GVHSQKTGAA (169 aa). Residues 2879–2931 form the BPTI/Kunitz inhibitor domain; that stretch reads CSLPLDEGSCTAYTLRWYHRAVPGGTACHPFVYGGCGGNANRFGTREACERRC. 3 cysteine pairs are disulfide-bonded: Cys2879–Cys2931, Cys2888–Cys2914, and Cys2906–Cys2927.

As to quaternary structure, homotrimer. Interacts with MIA3/TANGO1; facilitating its loading into transport carriers and subsequent secretion. Prolines at the third position of the tripeptide repeating unit (G-X-Y) are hydroxylated in some or all of the chains.

The protein resides in the secreted. Its subcellular location is the extracellular space. It is found in the extracellular matrix. The protein localises to the basement membrane. Stratified squamous epithelial basement membrane protein that forms anchoring fibrils which may contribute to epithelial basement membrane organization and adherence by interacting with extracellular matrix (ECM) proteins such as type IV collagen. The polypeptide is Collagen alpha-1(VII) chain (Mus musculus (Mouse)).